A 502-amino-acid chain; its full sequence is Cytochrome P450 monooxygenase verC (502 aa).

The chain crosses the membrane as a helical span at residues 9–29 (IAALPMVSLLGAALIVVSVLG). Residues asparagine 124, asparagine 190, asparagine 271, and asparagine 342 are each glycosylated (N-linked (GlcNAc...) asparagine). Residue cysteine 444 coordinates heme.

Belongs to the cytochrome P450 family. Heme serves as cofactor.

It localises to the membrane. It participates in mycotoxin biosynthesis. Its function is as follows. Cytochrome P450 monooxygenase; part of the gene cluster that mediates the biosynthesis of 11'-deoxyverticillin A, one of the dimeric epipolythiodioxopiperazines (ETPs) from the verticillin family that act as mycotoxins. 11'-deoxyverticillin A is required for normal conidiation. The nonribosomal peptide synthetase verP is speculated to be responsible for condensation of amino acids to form the carbon skeleton of verticillin, whereas the cluster-specific tailoring enzymes are involved in further modifications leading to the production of 11'-deoxyverticillin A. This Clonostachys rogersoniana protein is Cytochrome P450 monooxygenase verC.